Reading from the N-terminus, the 572-residue chain is Arginine--tRNA ligase (572 aa).

The 'HIGH' region motif lies at 122-132 (PNLAKEMHVGH).

The protein belongs to the class-I aminoacyl-tRNA synthetase family. As to quaternary structure, monomer.

It localises to the cytoplasm. It carries out the reaction tRNA(Arg) + L-arginine + ATP = L-arginyl-tRNA(Arg) + AMP + diphosphate. This chain is Arginine--tRNA ligase, found in Neisseria meningitidis serogroup A / serotype 4A (strain DSM 15465 / Z2491).